We begin with the raw amino-acid sequence, 260 residues long: Dynein regulatory complex subunit 6 (260 aa).

The span at 1-13 (MAPKKKGGGKKKK) shows a compositional bias: basic residues. Residues 1–43 (MAPKKKGGGKKKKKDDGAEPPHDGSWERAVESGTWEKPVTDLP) are disordered. The span at 14-30 (KDDGAEPPHDGSWERAV) shows a compositional bias: basic and acidic residues.

It belongs to the DRC6 family. Component of the nexin-dynein regulatory complex (N-DRC).

Its subcellular location is the cytoplasm. The protein localises to the cytoskeleton. It is found in the flagellum axoneme. Functionally, component of the nexin-dynein regulatory complex (N-DRC), a key regulator of ciliary/flagellar motility which maintains the alignment and integrity of the distal axoneme and regulates microtubule sliding in motile axonemes. The sequence is that of Dynein regulatory complex subunit 6 from Chlamydomonas reinhardtii (Chlamydomonas smithii).